Here is an 87-residue protein sequence, read N- to C-terminus: uncharacterized protein (87 aa).

It to A.fulgidus AF_1348 and AF_1363.

This is an uncharacterized protein from Archaeoglobus fulgidus (strain ATCC 49558 / DSM 4304 / JCM 9628 / NBRC 100126 / VC-16).